Here is a 2031-residue protein sequence, read N- to C-terminus: MATGGGPPDEALSDQDLPNWSHESLDDRLNNMHWNGQKKGNRSAEKNKKKFVECDLRLTNDISPESSPGVGRRRARTPHTFPHTRYVSQMSVPEQAELEKLKQKINFSDLDQRSIGSDSQGRATAANNKRQLADNRKPFNFLPSQLNTNKEKSKSPPKREASTRSLTKDFLASALNKDFLSNSQAFLEEESKREPAIDSSQVVSRLVQIRDYITKASSLRDDLVQKKDLSVNVERLSNLIEHLKFQEKSYLKFLQKMLASENEEEDVRTVDSAVGSGSVVESTLLTFDVPSEASDTTGVDPRQEAKEELKNMKKQHALLTRMLQQQEQLRTLKGRQAALLALQHKAEQAIAKMDESVVTETTGSVSGLSLTSELNEELNDLIQRFHNQLHDSEDPPAPDNRRQAESLSLAREVYRSRNSSTSDTPLEDKSPLFNNVGVLLEKKQKMDTLLGELHTLQDQQLNNTAFVASSVSPRRSTEQRTLGSAVSSALTSDNRAARSPVTIGAYQTASVNESEDEENQNPAEKLKKLKEVRKRLNELRELVHYYEQTSDMMTDAMNENTKDEDETEDSEYDSEQEDAEPTTNIRNPQYRSSWAQMNINSNNQSGTNNRDERQLNTECEINNRSAVNLRSFNMPSALDCLYNIEHSDKEEDGNRELDDEDAEDQGSRASLSSQNSVADDVQSVDFEQKFNRLVAAKQKLKQLQDLVAMYGDDSESEPVAPERSFSGDQFPPEATTLKQQPNNTRPNVSKAQKDIALKEQAREKFYESKLQQQQRELSQLQEERKKLIEIQEKIQTLRKACPDLQLSTSSAGTNPANRQNRQMTTTTSTPDVNTNGNIVVPAMPDPEDSSSVDNEVWSEIRKHQILREDLRQRRKQLETLMAEHQRRQGNTETTSAASIRSDDSDTQGLQQQTRTEKTMATWGGSTQCALEEEEEEEEVDDEECLSDVHQIDIEEDEQDNTSCENNSYPQNSIRKTSFNGRSSKDGWKNQCPLSVEGNHRPSPKTRQQQNVSMRRQENYRWMSELSHVEEKEHWQEQIDQIKKQLDYSTSICQTLMRDQQALSYLLQSMITTPYSVMPSNVGASQVQLIMHQLNQCYTQLNWQQSNVLRLKQMLNDLLVQQPQHLQGESHQREDRGSSAPPLTSPNIFPNFSFLPPTMNLLNMPAFGSIPNVVPGMNFNPVFPHGFENFTQNVASHTDTPLQPHDQNTSGKTEYMAFPKPFESHRSNSTEKERNPPKKPDESEQGRRVWVENHQKSDQEKKPACFGAGLSAGGASAKLAEESRKVKQFDEVSVESLSSMPDPVDPTTVTKMFKSRKASAQASLASKDKTPKAKNKKRKVFHQKSKGIKSCGFQAASASSASEPNQTTCKHAQTEEVVVGNVIKTSSAQRVEKESKATEMSSEAGSDVSMFETLRDTIYSEVATLISQNESRPHFLIELFHELQLLNTDYLRQKALFALQDIVTRHVSEGNAKKHETCTKALESTGWMASTSELTPSESLVTTDDEMYAKNSDGPVCQEGEQNDGDNISSLSTSSNFEPFATDDLGNTVIHFDQALARMREYERMKSETENGLVADCCNNLNAAASSLEGTNDEARGRAQHSVDDASGIPCPYIDSKQLDRQIKAIMKEVIPFLKEHMEEVCSPNLLTSIRRLVLTLTQQNDESKEFVKFFHKQLGSILQDSLAKFSSKKLKDCGEDLLVEISEVLFNELAFFRLMQDLDNNSTAVQGTVSRKPEAVVVLESFTKEADKEEKTCPEENFSATRETDDEDKDKDETETAEENRNFDAEVLSGKSDISEEDDLDESLPVSISFTKAETQALTNYGSGEDENEDEENYEFEARPVDVQTSLETSSEIADETEKEEMEVRPEANIENEKALSLAVNVMGELSIHEDQAKSDCDVLAHPSLLLSNEKATDFSGTALVNNVKSPVDSPGTSGAGSSDTESPVLVNDFETGSGNLSQKSDEDDFVKVEDLPLKLSLPQEQIMKDIEEEENKNNLCDEILNINDEENGADQLAGDPLALKEPDSPAIHPA.

Disordered stretches follow at residues 1-82 (MATG…HTFP) and 111-165 (DQRS…STRS). Residues 1 to 484 (MATGGGPPDE…RSTEQRTLGS (484 aa)) form a self-association region. Basic and acidic residues predominate over residues 42–58 (RSAEKNKKKFVECDLRL). The segment covering 114–130 (SIGSDSQGRATAANNKR) has biased composition (polar residues). The segment covering 149-162 (NKEKSKSPPKREAS) has biased composition (basic and acidic residues). The stretch at 302 to 394 (RQEAKEELKN…FHNQLHDSED (93 aa)) forms a coiled coil. Positions 469–494 (SSVSPRRSTEQRTLGSAVSSALTSDN) are enriched in polar residues. Residues 469 to 495 (SSVSPRRSTEQRTLGSAVSSALTSDNR) form a disordered region. The stretch at 523 to 549 (AEKLKKLKEVRKRLNELRELVHYYEQT) forms a coiled coil. Disordered stretches follow at residues 550 to 590 (SDMM…NPQY) and 649 to 678 (KEED…NSVA). The span at 562–580 (KDEDETEDSEYDSEQEDAE) shows a compositional bias: acidic residues. 2 stretches are compositionally biased toward polar residues: residues 581–590 (PTTNIRNPQY) and 667–677 (SRASLSSQNSV). Residues 684 to 711 (VDFEQKFNRLVAAKQKLKQLQDLVAMYG) are a coiled coil. The disordered stretch occupies residues 712–752 (DDSESEPVAPERSFSGDQFPPEATTLKQQPNNTRPNVSKAQ). Residues 736 to 750 (TLKQQPNNTRPNVSK) show a composition bias toward polar residues. A self-association and localization to centrosomes region spans residues 745–1271 (RPNVSKAQKD…PACFGAGLSA (527 aa)). The stretch at 757-805 (LKEQAREKFYESKLQQQQRELSQLQEERKKLIEIQEKIQTLRKACPDLQ) forms a coiled coil. Composition is skewed to polar residues over residues 806–823 (LSTS…NRQM) and 888–898 (QGNTETTSAAS). Disordered stretches follow at residues 806 to 835 (LSTS…VNTN) and 882 to 1014 (AEHQ…VSMR). A coiled-coil region spans residues 858-892 (SEIRKHQILREDLRQRRKQLETLMAEHQRRQGNTE). Over residues 930–945 (LEEEEEEEEVDDEECL) the composition is skewed to acidic residues. Composition is skewed to polar residues over residues 960 to 981 (NTSC…FNGR) and 1004 to 1013 (KTRQQQNVSM). A coiled-coil region spans residues 1025–1049 (LSHVEEKEHWQEQIDQIKKQLDYST). Disordered stretches follow at residues 1123–1146 (QHLQ…TSPN), 1219–1247 (KPFE…QGRR), 1318–1345 (SAQA…QKSK), and 1514–1533 (PVCQ…LSTS). Basic and acidic residues-rich tracts occupy residues 1127-1136 (GESHQREDRG) and 1221-1247 (FESH…QGRR). A compositionally biased stretch (basic residues) spans 1331–1345 (KAKNKKRKVFHQKSK). Residues 1524–1533 (GDNISSLSTS) show a composition bias toward polar residues. Positions 1550 to 1599 (HFDQALARMREYERMKSETENGLVADCCNNLNAAASSLEGTNDEARGRAQ) form a coiled coil. 4 disordered regions span residues 1746 to 1802 (ADKE…DLDE), 1817 to 1870 (ALTN…EANI), 1922 to 1965 (NNVK…DEDD), and 2007 to 2031 (ENGA…IHPA). Basic and acidic residues predominate over residues 1771 to 1784 (KDETETAEENRNFD). Over residues 1824-1835 (GEDENEDEENYE) the composition is skewed to acidic residues. Composition is skewed to polar residues over residues 1843–1852 (VQTSLETSSE) and 1922–1942 (NNVK…SDTE).

It belongs to the PCM1 family. In terms of assembly, self-associates. Interacts with cetn3.

It is found in the cytoplasm. The protein resides in the cytoskeleton. Its subcellular location is the microtubule organizing center. The protein localises to the centrosome. It localises to the cytoplasmic granule. It is found in the centriolar satellite. The protein resides in the cilium basal body. In terms of biological role, required to anchor microtubules to the centrosome. Required for centrosome assembly and function. Essential for the correct localization of several centrosomal proteins including cetn3 and pcnt. Probably involved in the biogenesis of cilia. The sequence is that of Pericentriolar material 1 protein (pcm1) from Xenopus laevis (African clawed frog).